A 266-amino-acid chain; its full sequence is GTP cyclohydrolase III (266 aa).

The protein belongs to the archaeal-type GTP cyclohydrolase family.

The enzyme catalyses GTP + 3 H2O = 2-amino-5-formylamino-6-(5-phospho-D-ribosylamino)pyrimidin-4(3H)-one + 2 phosphate + 2 H(+). Its function is as follows. Catalyzes the formation of 2-amino-5-formylamino-6-ribofuranosylamino-4(3H)-pyrimidinone ribonucleotide monophosphate and inorganic phosphate from GTP. Also has an independent pyrophosphate phosphohydrolase activity. This Methanococcus maripaludis (strain C5 / ATCC BAA-1333) protein is GTP cyclohydrolase III.